Reading from the N-terminus, the 491-residue chain is UDP-N-acetylmuramate--L-alanine ligase (491 aa).

126-132 contacts ATP; it reads GTHGKTT.

This sequence belongs to the MurCDEF family.

The protein resides in the cytoplasm. The enzyme catalyses UDP-N-acetyl-alpha-D-muramate + L-alanine + ATP = UDP-N-acetyl-alpha-D-muramoyl-L-alanine + ADP + phosphate + H(+). It participates in cell wall biogenesis; peptidoglycan biosynthesis. Functionally, cell wall formation. This is UDP-N-acetylmuramate--L-alanine ligase from Shigella sonnei (strain Ss046).